The primary structure comprises 469 residues: Proline--tRNA ligase (469 aa).

Belongs to the class-II aminoacyl-tRNA synthetase family. ProS type 3 subfamily. Homodimer.

It localises to the cytoplasm. The enzyme catalyses tRNA(Pro) + L-proline + ATP = L-prolyl-tRNA(Pro) + AMP + diphosphate. In terms of biological role, catalyzes the attachment of proline to tRNA(Pro) in a two-step reaction: proline is first activated by ATP to form Pro-AMP and then transferred to the acceptor end of tRNA(Pro). This is Proline--tRNA ligase from Methanobrevibacter smithii (strain ATCC 35061 / DSM 861 / OCM 144 / PS).